The primary structure comprises 1000 residues: Vacuolar sorting protein 39 (1000 aa).

The region spanning 16–282 (PARIDAVESY…RRLVKSNNAV (267 aa)) is the CNH domain. The interval 394 to 413 (DEASLSRGSSGISDDMESSS) is disordered. The CHCR repeat unit spans residues 607 to 796 (YSMLVLESCP…YLNPKKSAKD (190 aa)). Positions 844–864 (GLSSSTDSGRSDVDTEEPLEE) are disordered.

This sequence belongs to the VAM6/VPS39 family. In terms of assembly, homooligomer. Component of the homotypic fusion and vacuole protein sorting (HOPS) complex composed of the class C Vps core proteins VPS11, VCL1, VPS18 and VPS33, which in HOPS further associates with VPS39 and VPS41. Interacts directly with VPS11. Binds to RABG3B.

Its subcellular location is the cytoplasm. The protein localises to the vacuole membrane. In terms of biological role, essential protein required during embryogenesis. Believed to act in part as a component of the putative HOPS endosomal tethering complex. HOPS is required for the central vacuole formation. May play a role in clustering and fusion of late endosomes and lysosomes. Plays a role in vesicle-mediated protein trafficking to lysosomal compartments including the endocytic membrane transport and autophagic pathways. Required for fusion of endosomes and autophagosomes with lysosomes. The sequence is that of Vacuolar sorting protein 39 from Arabidopsis thaliana (Mouse-ear cress).